Consider the following 430-residue polypeptide: MWRLVPLKLGRLSRALKLAALGSLLVLMLLHSPSLLASWQRNELADRRFLQLNKCPACFGTSWCRRFLNGQVGFETWGRLRLLDFLNVKNVYFAQYGEPREGGRRRVVLKRLGSQRELAQLDQSICKRATGRPRCDLLQAMPRTEFARLNGDVRLLTPEAVEGWSDLVHCPSQRLLDRLVRRYAETKDSGSFLLRNLKDSERMQLLLTLAFNPEPLVLQSFPSDEGWPFAKYLGACGRMVAVNYVGEELWSYFNAPWEKRVDLAWQLMEIAEQLTNNDFEFALYLLDVSFDNFAVGPRDGKVIIVDAENVLVADKRLIRQNKPENWDVWYESKFDDCDKEACLSFSKEILCARVTVDHNYYAVCQNLLSRHATWRGTSGGLLHDPPSEIAKDGRLEALLDECTNPKKRYGRFQAAKELRGYLAQLSHNVR.

The signal sequence occupies residues 1-35 (MWRLVPLKLGRLSRALKLAALGSLLVLMLLHSPSL).

The protein belongs to the DIPK family. In terms of tissue distribution, expressed in heart, brain, liver, spleen, kidney, lung, thymus, testis, ovary and muscle.

It localises to the golgi apparatus. It is found in the cytoplasmic vesicle. The protein localises to the COPI-coated vesicle. The protein resides in the secreted. Functionally, may play a role in cardiomyocyte proliferation through paracrine signaling and activation of the PI3-kinase signaling cascade. The polypeptide is Divergent protein kinase domain 2A (Dipk2a) (Mus musculus (Mouse)).